Reading from the N-terminus, the 289-residue chain is T-cell ecto-ADP-ribosyltransferase 2 (289 aa).

The N-terminal stretch at 1–20 (MTSKIFKFFLTWWLTQQVTG) is a signal peptide. Intrachain disulfides connect C41–C246 and C141–C193. The TR mART core domain occupies 61–241 (EELKLEWEKA…IFLDSPERKK (181 aa)). A glycan (N-linked (GlcNAc...) asparagine) is linked at N79. NAD(+)-binding residues include Y98, R146, and Q164. R146 is a catalytic residue. S167 is a catalytic residue. S202 contributes to the NAD(+) binding site. E209 is a catalytic residue. The N-linked (GlcNAc...) asparagine glycan is linked to N249. S260 carries GPI-anchor amidated serine lipidation. A propeptide spans 261 to 289 (ISGSRESCVSLFLVVLLGLLVQQLTLAEL) (removed in mature form).

It belongs to the Arg-specific ADP-ribosyltransferase family. Expressed in spleen, intestine and thymus.

The protein resides in the cell membrane. The enzyme catalyses L-arginyl-[protein] + NAD(+) = N(omega)-(ADP-D-ribosyl)-L-arginyl-[protein] + nicotinamide + H(+). It carries out the reaction NAD(+) + H2O = ADP-D-ribose + nicotinamide + H(+). Functionally, has both NAD(+) glycohydrolase and ADP-ribosyltransferase activity. This Mus musculus (Mouse) protein is T-cell ecto-ADP-ribosyltransferase 2 (Art2b).